A 531-amino-acid polypeptide reads, in one-letter code: Maturase K (531 aa).

The protein belongs to the intron maturase 2 family. MatK subfamily.

The protein localises to the plastid. It is found in the chloroplast. In terms of biological role, usually encoded in the trnK tRNA gene intron. Probably assists in splicing its own and other chloroplast group II introns. The sequence is that of Maturase K from Ephedra sinica (Chinese ephedra).